A 186-amino-acid chain; its full sequence is ATP synthase subunit delta (186 aa).

The protein belongs to the ATPase delta chain family. In terms of assembly, F-type ATPases have 2 components, F(1) - the catalytic core - and F(0) - the membrane proton channel. F(1) has five subunits: alpha(3), beta(3), gamma(1), delta(1), epsilon(1). F(0) has three main subunits: a(1), b(2) and c(10-14). The alpha and beta chains form an alternating ring which encloses part of the gamma chain. F(1) is attached to F(0) by a central stalk formed by the gamma and epsilon chains, while a peripheral stalk is formed by the delta and b chains.

Its subcellular location is the cell inner membrane. F(1)F(0) ATP synthase produces ATP from ADP in the presence of a proton or sodium gradient. F-type ATPases consist of two structural domains, F(1) containing the extramembraneous catalytic core and F(0) containing the membrane proton channel, linked together by a central stalk and a peripheral stalk. During catalysis, ATP synthesis in the catalytic domain of F(1) is coupled via a rotary mechanism of the central stalk subunits to proton translocation. Functionally, this protein is part of the stalk that links CF(0) to CF(1). It either transmits conformational changes from CF(0) to CF(1) or is implicated in proton conduction. In Brucella suis biovar 1 (strain 1330), this protein is ATP synthase subunit delta.